The sequence spans 177 residues: Large ribosomal subunit protein uL6 (177 aa).

The protein belongs to the universal ribosomal protein uL6 family. In terms of assembly, part of the 50S ribosomal subunit.

Its function is as follows. This protein binds to the 23S rRNA, and is important in its secondary structure. It is located near the subunit interface in the base of the L7/L12 stalk, and near the tRNA binding site of the peptidyltransferase center. The polypeptide is Large ribosomal subunit protein uL6 (Pectobacterium atrosepticum (strain SCRI 1043 / ATCC BAA-672) (Erwinia carotovora subsp. atroseptica)).